We begin with the raw amino-acid sequence, 281 residues long: CDAN1-interacting nuclease 1 (281 aa).

T114 is subject to Phosphothreonine.

The protein resides in the nucleus. Its subcellular location is the cytoplasm. Its function is as follows. Plays a role in erythroid cell differentiation. The protein is CDAN1-interacting nuclease 1 of Homo sapiens (Human).